The following is a 101-amino-acid chain: Small ribosomal subunit protein uS14 (101 aa).

This sequence belongs to the universal ribosomal protein uS14 family. Part of the 30S ribosomal subunit. Contacts proteins S3 and S10.

In terms of biological role, binds 16S rRNA, required for the assembly of 30S particles and may also be responsible for determining the conformation of the 16S rRNA at the A site. The polypeptide is Small ribosomal subunit protein uS14 (Cronobacter sakazakii (strain ATCC BAA-894) (Enterobacter sakazakii)).